The primary structure comprises 151 residues: Sec-independent protein translocase protein TatB (151 aa).

Residues Met1–Gly21 traverse the membrane as a helical segment. Basic and acidic residues-rich tracts occupy residues Lys87–Arg99 and Glu122–Ala132. Residues Lys87–Ser151 form a disordered region. Over residues Ala134–Ser151 the composition is skewed to low complexity.

The protein belongs to the TatB family. The Tat system comprises two distinct complexes: a TatABC complex, containing multiple copies of TatA, TatB and TatC subunits, and a separate TatA complex, containing only TatA subunits. Substrates initially bind to the TatABC complex, which probably triggers association of the separate TatA complex to form the active translocon.

Its subcellular location is the cell inner membrane. Part of the twin-arginine translocation (Tat) system that transports large folded proteins containing a characteristic twin-arginine motif in their signal peptide across membranes. Together with TatC, TatB is part of a receptor directly interacting with Tat signal peptides. TatB may form an oligomeric binding site that transiently accommodates folded Tat precursor proteins before their translocation. This chain is Sec-independent protein translocase protein TatB, found in Marinobacter nauticus (strain ATCC 700491 / DSM 11845 / VT8) (Marinobacter aquaeolei).